Here is a 967-residue protein sequence, read N- to C-terminus: MAALGPKMERLSSIDAQLRMLVPGKVSEDDKLIEYDALLLDRFLDILQDLHGDDLKEMVQECYEVAAEYETKHDLQKLDELGKMITSLDPGDSIVIAKSLSHMLNLANLAEEVQIAYRRRIKLKKGDFADENSAITESDIEETLKRLVVDLKKSPAEVFDALKSQTVDLVLTAHPTQSVRRSLLQKHSRIRNCLVQLYSKDITPDDKQELDEALQREIQAAFRTDEIRRTQPTPQDEMRAGMSYFHETIWKGVPKFLRRVDTALKNIGINERVPYNAPLIQFSSWMGGDRDGNPRVTPEVTRDVCLLARMMASNLYCSQIEDLMFELSMWRCSDELRMRADVLHLSTKKDAKHYIEFWKKVPPNEPYRVILSDVRDKLYNTRERSRELLSSGHSDIPEEATLTNVEQLLEPLELCYRSLCACGDSVIADGTLLDFLRQVSTFGLSLVRLDIRQESDRHTDVLDAITTYLGIGSYREWTEERRQEWLLSELNGKRPLFGSDLPKTEEISDVLDTFHVIAELPSDNFGAYIISMATAPSDVLAVELLQRECHVKTPLRVVPLFEKLADLEAAPAALARLFSIDWYRQRINGKQEVMIGYSDSGKDAGRLSAAWQLYKAQEELIKVAKDFGVKLTMFHGRGGTVGRGGGPTHLAILSQPPDTIHGSLRVTVQGEVIEQSFGEEHLCFRTLQRFTAATLEHGMHPPNAPKPEWRALLDEMAVVATEEYRSIVFKEPRFVEYFRLATPETEYGRMNIGSRPSKRKPSGGIDSLRAIPWIFAWTQTRFHLPVWLGFGAAFKNVLQKDIRNLHMLQEMYNEWPFFRVTIDLVEMVFAKGNPGIAALYDKLLVSEELHPLGEKLRANYEETQKLLLQVAGHRDLLEGDLYLKQRLRLRDAYITTLNVCQAYTLKRIRDPDYHVALRPHLSKEIMDSTKAAADVVKLNPGSEYAPGLEDTLILTMKGIAAGLQNTG.

S13 carries the phosphoserine modification. Residues H174 and K602 contribute to the active site.

Belongs to the PEPCase type 1 family. Homotetramer. Mg(2+) is required as a cofactor.

The protein resides in the cytoplasm. The enzyme catalyses oxaloacetate + phosphate = phosphoenolpyruvate + hydrogencarbonate. Its pathway is photosynthesis; C3 acid pathway. By light-reversible phosphorylation. In terms of biological role, through the carboxylation of phosphoenolpyruvate (PEP) it forms oxaloacetate, a four-carbon dicarboxylic acid source for the tricarboxylic acid cycle. The chain is Phosphoenolpyruvate carboxylase 2 (PEP4) from Zea mays (Maize).